The following is a 169-amino-acid chain: Putative phosphoesterase SE_0715 (169 aa).

The Proton donor role is filled by His-34. 2 consecutive short sequence motifs (HXTX) follow at residues 34–37 (HITI) and 115–118 (HFTI). His-115 (proton acceptor) is an active-site residue.

It belongs to the 2H phosphoesterase superfamily. YjcG family.

The sequence is that of Putative phosphoesterase SE_0715 from Staphylococcus epidermidis (strain ATCC 12228 / FDA PCI 1200).